A 431-amino-acid chain; its full sequence is Ornithine aminotransferase, mitochondrial (431 aa).

Lys286 is modified (N6-(pyridoxal phosphate)lysine).

Belongs to the class-III pyridoxal-phosphate-dependent aminotransferase family. In terms of assembly, homotetramer. The cofactor is pyridoxal 5'-phosphate.

It localises to the mitochondrion matrix. The enzyme catalyses a 2-oxocarboxylate + L-ornithine = L-glutamate 5-semialdehyde + an L-alpha-amino acid. It functions in the pathway amino-acid biosynthesis; L-proline biosynthesis; L-glutamate 5-semialdehyde from L-ornithine: step 1/1. The protein is Ornithine aminotransferase, mitochondrial (Oat) of Drosophila melanogaster (Fruit fly).